The chain runs to 993 residues: SLWGTPRLPCSPGWQGATKRLLVRSVSGASNHQPNSNTGRYRDTVLLPQTSFPMKLLGRQQPDKELEIQQKCGFSELYSWQRERKVKTEFCLHDGPPYANGDPHVGHALNKILKDIANRFHMMSGSKVHFVPGWDCHGLPIEIKVLSELGREAQNLSAMEIREKARSFAKAAIEKQKSAFIRWGIMADWNNCYYTFDGKYEAKQLRTFYQMYDKGLVYRSYKPVFWSPSSRTALAEAELEYNPEHVSRSIYVKFPLLKPSPKLASLIDGSSPVSFLVWTTQPWTIPANEAVCYMPESKYAVVKCSKSGDLYVLAADKVETVASTLETAFETISTFSGVDLENGTCSHPLIPDKASPLLPANHVTMAKGTGLVHTAPAHGMEDYGVASQHNLPMDCLVDEDGVFTDVAGPELQNKAVLEEGTDVVIKMLQTAKNLLKEEKLVHSYPYDWRTKKPVVIRASKQWFINIADIKIAAKELLKKVKFIPGSALNGMVEMMDRRPYWCISRQRVWGVPIPVFHHKTKDEYLINSQTIEHIVKLVEQHGSDVWWTLPPEQLLPKEVLSEVGGPDALEYVPGQDILDIWFDSGTSWSHVLPGPDQRADLYLEGKDQLGGWFQSSLLTSVATRKKAPYKTVIVHGFTLGEKGEKMSKSLGNVIHPDVVVNGGQDQSKEPPYGADVLRWWVADSNVFTEVAIGPSVLNAARDDISKLRNTLRFLLGNVADFNPETDSIPVNDMYVIDQYMLHLLQDLANKITELYKQYDFGKVVRLLRTFYTRELSHFYFSIIKDRLYCEKENDPRRRSCQTALVEILDVIVRSFAPILPHLAEEVFQHIPYIKEPKSVFRTGWISTSSIWKKPGLEEAVESVCAMRDSFLGSIPGKNAAEYKVIIVIEPGLLFEIIEMLQSEETSSTSQLNELMMASESTLLAQEPRELTADVIELKGKFLINLEGGDIREESSYKVIVMPTTKEKCPRCWKYTAESSDTLCPRCAEVVSGK.

The transit peptide at 1-29 (SLWGTPRLPCSPGWQGATKRLLVRSVSGA) directs the protein to the mitochondrion. Residue Lys-55 is modified to N6-acetyllysine; alternate. The residue at position 55 (Lys-55) is an N6-succinyllysine; alternate. The short motif at 97–107 (PYANGDPHVGH) is the 'HIGH' region element. An N6-acetyllysine modification is found at Lys-170. Position 175 is an N6-succinyllysine (Lys-175). Position 214 is an N6-acetyllysine (Lys-214). Residue Lys-222 is modified to N6-acetyllysine; alternate. The residue at position 222 (Lys-222) is an N6-succinyllysine; alternate. N6-succinyllysine is present on residues Lys-460 and Lys-481. ATP is bound by residues Lys-645 and Lys-648. Residues 645-649 (KMSKS) carry the 'KMSKS' region motif. N6-acetyllysine is present on Lys-706. Residues Lys-756 and Lys-762 each carry the N6-acetyllysine; alternate modification. N6-succinyllysine; alternate occurs at positions 756 and 762.

This sequence belongs to the class-I aminoacyl-tRNA synthetase family.

The protein localises to the mitochondrion matrix. The catalysed reaction is tRNA(Ile) + L-isoleucine + ATP = L-isoleucyl-tRNA(Ile) + AMP + diphosphate. Aminoacyl-tRNA synthetase that catalyzes the specific attachment of isoleucine to its cognate tRNA (tRNA(Ile)). The protein is Isoleucine--tRNA ligase, mitochondrial (IARS2) of Macaca fascicularis (Crab-eating macaque).